Here is a 203-residue protein sequence, read N- to C-terminus: Protein-methionine-sulfoxide reductase heme-binding subunit MsrQ (203 aa).

6 helical membrane-spanning segments follow: residues 10 to 30 (IFVVGCLFPAWWLYEAAMSLL), 42 to 62 (LGLGALTFLLVTLCMTPLQKL), 75 to 95 (LGLWVFAYIVLHILAYLFFIL), 110 to 130 (PYIIVGALGFLGLLVLAITSN), 147 to 167 (LVYAVLGLGLLHFLWIVRSDL), and 169 to 189 (EWSIYALIGAVLMVLRIPAVA).

Belongs to the MsrQ family. Heterodimer of a catalytic subunit (MsrP) and a heme-binding subunit (MsrQ). Requires FMN as cofactor. Heme b is required as a cofactor.

The protein resides in the cell inner membrane. Functionally, part of the MsrPQ system that repairs oxidized periplasmic proteins containing methionine sulfoxide residues (Met-O), using respiratory chain electrons. Thus protects these proteins from oxidative-stress damage caused by reactive species of oxygen and chlorine generated by the host defense mechanisms. MsrPQ is essential for the maintenance of envelope integrity under bleach stress, rescuing a wide series of structurally unrelated periplasmic proteins from methionine oxidation. MsrQ provides electrons for reduction to the reductase catalytic subunit MsrP, using the quinone pool of the respiratory chain. In Pseudomonas putida (strain GB-1), this protein is Protein-methionine-sulfoxide reductase heme-binding subunit MsrQ.